A 185-amino-acid polypeptide reads, in one-letter code: Cytidylate kinase (185 aa).

8–16 is an ATP binding site; that stretch reads GPPGSGKTT.

It belongs to the cytidylate kinase family. Type 2 subfamily.

It localises to the cytoplasm. It catalyses the reaction CMP + ATP = CDP + ADP. It carries out the reaction dCMP + ATP = dCDP + ADP. In Desulfurococcus amylolyticus (strain DSM 18924 / JCM 16383 / VKM B-2413 / 1221n) (Desulfurococcus kamchatkensis), this protein is Cytidylate kinase.